Here is a 61-residue protein sequence, read N- to C-terminus: Double gene block protein 2 (61 aa).

The Cytoplasmic portion of the chain corresponds to 1–12 (MACCRCDSSPGD). The helical; Signal-anchor for type II membrane protein transmembrane segment at 13–33 (YSGALLILFISFVFFYITSLS) threads the bilayer. Topologically, residues 34–61 (PQGNTYVHHFDSSSVKTQYVGISTNGDG) are lumenal.

It belongs to the gammacarmovirus double gene block protein 2 family.

It localises to the host endoplasmic reticulum membrane. Cell-to-cell movement function. The polypeptide is Double gene block protein 2 (Melon necrotic spot virus (MNSV)).